Reading from the N-terminus, the 318-residue chain is Ribose-phosphate pyrophosphokinase 2 (318 aa).

Residues aspartate 132, histidine 134, histidine 143, and aspartate 147 each contribute to the Mg(2+) site.

This sequence belongs to the ribose-phosphate pyrophosphokinase family.

It is found in the cytoplasm. The catalysed reaction is D-ribose 5-phosphate + ATP = 5-phospho-alpha-D-ribose 1-diphosphate + AMP + H(+). It functions in the pathway metabolic intermediate biosynthesis; 5-phospho-alpha-D-ribose 1-diphosphate biosynthesis; 5-phospho-alpha-D-ribose 1-diphosphate from D-ribose 5-phosphate (route I): step 1/1. 5-phosphoribose 1-diphosphate synthase involved in nucleotide, histidine, and tryptophan biosynthesis. Active in heteromultimeric complexes with other 5-phosphoribose 1-diphosphate synthases (PRS2, PRS3, PRS4 and PRS5). The polypeptide is Ribose-phosphate pyrophosphokinase 2 (PRS2) (Saccharomyces cerevisiae (strain ATCC 204508 / S288c) (Baker's yeast)).